A 130-amino-acid chain; its full sequence is Small ribosomal subunit protein uS11 (130 aa).

It belongs to the universal ribosomal protein uS11 family. In terms of assembly, part of the 30S ribosomal subunit. Interacts with proteins S7 and S18. Binds to IF-3.

Functionally, located on the platform of the 30S subunit, it bridges several disparate RNA helices of the 16S rRNA. Forms part of the Shine-Dalgarno cleft in the 70S ribosome. This chain is Small ribosomal subunit protein uS11, found in Gluconacetobacter diazotrophicus (strain ATCC 49037 / DSM 5601 / CCUG 37298 / CIP 103539 / LMG 7603 / PAl5).